Consider the following 169-residue polypeptide: Lipoprotein signal peptidase (169 aa).

3 helical membrane-spanning segments follow: residues 12–32, 70–90, and 102–122; these read WLWLVVVVLVLDFASKQWILG, WFFAGIAVAIVAVLLVMMYRS, and AFIIGGALGNLFDRLWHGFVV. Catalysis depends on residues D123 and D141. The helical transmembrane segment at 137–157 threads the bilayer; that stretch reads FNLADSFICVGAAMIVLEGFL.

It belongs to the peptidase A8 family.

It is found in the cell inner membrane. The catalysed reaction is Release of signal peptides from bacterial membrane prolipoproteins. Hydrolyzes -Xaa-Yaa-Zaa-|-(S,diacylglyceryl)Cys-, in which Xaa is hydrophobic (preferably Leu), and Yaa (Ala or Ser) and Zaa (Gly or Ala) have small, neutral side chains.. It functions in the pathway protein modification; lipoprotein biosynthesis (signal peptide cleavage). This protein specifically catalyzes the removal of signal peptides from prolipoproteins. The protein is Lipoprotein signal peptidase of Serratia proteamaculans (strain 568).